The chain runs to 465 residues: Methionine aminopeptidase 2-2 (465 aa).

Over residues 1-11 (MGSKTPHNHRR) the composition is skewed to basic residues. A disordered region spans residues 1–89 (MGSKTPHNHR…KKKKNTKELE (89 aa)). Acidic residues predominate over residues 43-54 (GESEGGEDEDDD). The segment covering 73-84 (RNKRKKKKKKKN) has biased composition (basic residues). Residue H217 participates in substrate binding. D238, D249, and H318 together coordinate a divalent metal cation. A substrate-binding site is contributed by H326. A divalent metal cation-binding residues include E351 and E446.

This sequence belongs to the peptidase M24A family. Methionine aminopeptidase eukaryotic type 2 subfamily. Co(2+) serves as cofactor. The cofactor is Zn(2+). Requires Mn(2+) as cofactor. It depends on Fe(2+) as a cofactor.

Its subcellular location is the cytoplasm. The catalysed reaction is Release of N-terminal amino acids, preferentially methionine, from peptides and arylamides.. Cotranslationally removes the N-terminal methionine from nascent proteins. The N-terminal methionine is often cleaved when the second residue in the primary sequence is small and uncharged (Met-Ala-, Cys, Gly, Pro, Ser, Thr, or Val). In Ajellomyces capsulatus (strain G186AR / H82 / ATCC MYA-2454 / RMSCC 2432) (Darling's disease fungus), this protein is Methionine aminopeptidase 2-2.